The following is a 101-amino-acid chain: Putative defensin-like protein 253 (101 aa).

Positions 1-23 are cleaved as a signal peptide; the sequence is MRFASLFVVYCTFMFLDISHVKC. 4 disulfides stabilise this stretch: Cys31–Cys84, Cys41–Cys66, Cys49–Cys76, and Cys64–Cys78.

Belongs to the DEFL family.

It localises to the secreted. This is Putative defensin-like protein 253 (SCRL15) from Arabidopsis thaliana (Mouse-ear cress).